An 86-amino-acid polypeptide reads, in one-letter code: Mu-theraphotoxin-Hhn1c (86 aa).

A signal peptide spans M1–A21. The propeptide occupies S22 to R49. 3 cysteine pairs are disulfide-bonded: C51–C66, C58–C73, and C65–C80. At I84 the chain carries Isoleucine amide.

It belongs to the neurotoxin 10 (Hwtx-1) family. 22 (Htx-4) subfamily. In terms of assembly, monomer. Expressed by the venom gland.

It localises to the secreted. Neurotoxin. Selectively blocks neuronal tetrodotoxin-sensitive voltage-gated sodium channels (Nav). Does not affect tetrodotoxin-resistant voltage-gated sodium channels or calcium channels. The protein is Mu-theraphotoxin-Hhn1c of Cyriopagopus hainanus (Chinese bird spider).